The sequence spans 162 residues: Cyclic pyranopterin monophosphate synthase (162 aa).

Substrate-binding positions include 75–77 (LCH) and 113–114 (ME). Asp128 is an active-site residue.

It belongs to the MoaC family. Homohexamer; trimer of dimers.

It catalyses the reaction (8S)-3',8-cyclo-7,8-dihydroguanosine 5'-triphosphate = cyclic pyranopterin phosphate + diphosphate. Its pathway is cofactor biosynthesis; molybdopterin biosynthesis. Its function is as follows. Catalyzes the conversion of (8S)-3',8-cyclo-7,8-dihydroguanosine 5'-triphosphate to cyclic pyranopterin monophosphate (cPMP). The chain is Cyclic pyranopterin monophosphate synthase from Klebsiella pneumoniae subsp. pneumoniae (strain ATCC 700721 / MGH 78578).